A 382-amino-acid chain; its full sequence is Chaperone protein DnaJ (382 aa).

The J domain occupies 5–70 (DYYEVLGLKK…QKRAAYDQYG (66 aa)). The CR-type zinc finger occupies 134–212 (GTTKDIQINT…CHGEGRVHKK (79 aa)). Zn(2+) contacts are provided by Cys-147, Cys-150, Cys-164, Cys-167, Cys-186, Cys-189, Cys-200, and Cys-203. 4 CXXCXGXG motif repeats span residues 147 to 154 (CDSCGGSG), 164 to 171 (CPHCHGSG), 186 to 193 (CPSCHGSG), and 200 to 207 (CRSCHGEG).

Belongs to the DnaJ family. Homodimer. Zn(2+) serves as cofactor.

Its subcellular location is the cytoplasm. Participates actively in the response to hyperosmotic and heat shock by preventing the aggregation of stress-denatured proteins and by disaggregating proteins, also in an autonomous, DnaK-independent fashion. Unfolded proteins bind initially to DnaJ; upon interaction with the DnaJ-bound protein, DnaK hydrolyzes its bound ATP, resulting in the formation of a stable complex. GrpE releases ADP from DnaK; ATP binding to DnaK triggers the release of the substrate protein, thus completing the reaction cycle. Several rounds of ATP-dependent interactions between DnaJ, DnaK and GrpE are required for fully efficient folding. Also involved, together with DnaK and GrpE, in the DNA replication of plasmids through activation of initiation proteins. This is Chaperone protein DnaJ from Haemophilus influenzae (strain PittGG).